A 202-amino-acid chain; its full sequence is GTP cyclohydrolase 1 (202 aa).

Positions 90, 93, and 163 each coordinate Zn(2+).

Belongs to the GTP cyclohydrolase I family. In terms of assembly, toroid-shaped homodecamer, composed of two pentamers of five dimers.

The enzyme catalyses GTP + H2O = 7,8-dihydroneopterin 3'-triphosphate + formate + H(+). The protein operates within cofactor biosynthesis; 7,8-dihydroneopterin triphosphate biosynthesis; 7,8-dihydroneopterin triphosphate from GTP: step 1/1. This Mycobacterium bovis (strain ATCC BAA-935 / AF2122/97) protein is GTP cyclohydrolase 1 (folE).